Here is a 116-residue protein sequence, read N- to C-terminus: Somatostatin (116 aa).

Residues 1–24 (MLSCRLQCALAALSIVLALGGVTG) form the signal peptide. Positions 25 to 88 (APSDPRLRQF…QDEMRLELQR (64 aa)) are excised as a propeptide. Position 43 is an alanine amide (A43). C105 and C116 are disulfide-bonded.

Belongs to the somatostatin family. C-terminal amidation of the neuronostatin peptide is required for its biological activity, including for the regulation of mean arterial pressure.

It localises to the secreted. Its function is as follows. Inhibits the secretion of pituitary hormones, including that of growth hormone/somatotropin (GH1), PRL, ACTH, luteinizing hormone (LH) and TSH. Also impairs ghrelin- and GnRH-stimulated secretion of GH1 and LH; the inhibition of ghrelin-stimulated secretion of GH1 can be further increased by neuronostatin. Functionally, may enhance low-glucose-induced glucagon release by pancreatic alpha cells. This effect may be mediated by binding to GPR107 and PKA activation. May regulate cardiac contractile function. May compromise cardiomyocyte viability. In the central nervous system, may impair memory retention and may affect hippocampal excitability. May also have anxiolytic and anorexigenic effects. May play a role in arterial pressure regulation. May inhibit basal, but not ghrelin- or GnRH-stimulated secretion of GH1 or LH, but does not affect the release of other pituitary hormones, including PRL, ACTH, FSH or TSH. Potentiates inhibitory action of somatostatin on ghrelin-stimulated secretion of GH1, but not that on GnRH-stimulated secretion of LH. The sequence is that of Somatostatin (SST) from Bos taurus (Bovine).